A 210-amino-acid polypeptide reads, in one-letter code: Chloramphenicol acetyltransferase (210 aa).

Histidine 79 is an active-site residue.

It belongs to the transferase hexapeptide repeat family.

It carries out the reaction chloramphenicol + acetyl-CoA = chloramphenicol 3-acetate + CoA. Its function is as follows. This enzyme is an effector of chloramphenicol resistance in bacteria. The protein is Chloramphenicol acetyltransferase (catB4) of Klebsiella aerogenes (Enterobacter aerogenes).